The chain runs to 332 residues: MKAVVVKGHKQGYEVREVQDPKPASGEVIIKVRRAALCYRDLLQLQGFYPRMKYPVVLGHEVVGEILEVGEGVTGFSPGDRVISLLYAPDGTCHYCRQGEEAYCHSRLGYSEELDGFFSEMAKVKVTSLVKVPTRASDEGAVMVPCVTGMVYRGLRRANLREGETVLVTGASGGVGIHALQVAKAMGARVVGVTTSEEKASIVGKYADRVIVGSKFSEEAKKEDINVVIDTVGTPTFDESLKSLWMGGRIVQIGNVDPTQSYQLRLGYTILKDIAIIGHASATRRDAEGALKLTAEGKIRPVVAGTVHLEEIDKGYEMLKDKHKVGKVLLTT.

Cys38 is a Zn(2+) binding site. An NADP(+)-binding site is contributed by Tyr39. Residues His60, Asp90, Cys93, Cys96, Cys104, and Cys146 each contribute to the Zn(2+) site. NADP(+) is bound by residues 172-175 (SGGV) and 194-196 (TTS).

It belongs to the zinc-containing alcohol dehydrogenase family. Monomer. Requires Zn(2+) as cofactor.

The enzyme catalyses propanoyl-CoA + NADP(+) = acryloyl-CoA + NADPH + H(+). Its function is as follows. Plays a role in autotrophic carbon fixation via the 3-hydroxypropionate/4-hydroxybutyrate cycle. Catalyzes the acryloyl-CoA dependent NADPH oxidation and formation of propionyl-CoA. This Metallosphaera sedula (strain ATCC 51363 / DSM 5348 / JCM 9185 / NBRC 15509 / TH2) protein is Acryloyl-coenzyme A reductase.